Consider the following 1262-residue polypeptide: Separin homolog sep-1 (1262 aa).

A Peptidase C50 domain is found at Val-957–Gly-1051. Cys-1040 is an active-site residue. The segment at Lys-1147 to Leu-1262 is disordered. Polar residues-rich tracts occupy residues Asn-1151–Thr-1162 and Phe-1177–Pro-1197. Residues Thr-1243–Leu-1262 are compositionally biased toward low complexity.

In terms of assembly, forms a complex with securin-like protein ify-1 (via C-terminus). Interaction with ify-1 stabilizes sep-1. Also maintains the complex in the cytoplasm during interphase and recruits it to chromosomes during the first meiotic division. Expressed in oocytes. Expressed in male germline. Expressed in spermatocytes but undetectable in spermatids (at protein level).

The protein localises to the cytoplasm. It is found in the chromosome. The protein resides in the cytoplasmic granule. Its subcellular location is the cytoskeleton. It localises to the microtubule organizing center. The protein localises to the centrosome. It is found in the spindle. The protein resides in the cleavage furrow. Its subcellular location is the midbody. It carries out the reaction All bonds known to be hydrolyzed by this endopeptidase have arginine in P1 and an acidic residue in P4. P6 is often occupied by an acidic residue or by a hydroxy-amino-acid residue, the phosphorylation of which enhances cleavage.. Probably maintained in an inactive state via its interaction with securin ify-1 which acts as a pseudosubstrate thereby blocking access to the catalytic site. Upon ify-1 degradation at the onset of anaphase, sep-1 is likely to become active. In addition, interaction with ify-1 stabilizes sep-1. Functionally, cysteine protease, which plays a central role in homologous chromosome separation during meiosis I and in sister chromatid separation during embryonic mitosis. Promotes chromosome/sister chromatid segregation by cleaving the scc-1 (mitosis) and rec-8 (meiosis) subunits of the cohesin complex at the onset of anaphase. May cleave histone H3-like protein cpar-1 during meiosis I metaphase-anaphase transition. Promotes cortical granule exocytosis after oocyte fertilization during the first meiotic anaphase. Essential for embryonic cytokinesis by regulating rab-11-positive vesicle trafficking at the plasma membrane at the cleavage furrow and midbody. Regulates centriole segregation during spermatocyte meiosis. Required for embryonic anterior-posterior axis formation. This Caenorhabditis elegans protein is Separin homolog sep-1.